The sequence spans 54 residues: Protein PIGBOS1 (54 aa).

At methionine 1–arginine 4 the chain is on the mitochondrial intermembrane side. Residues leucine 5–phenylalanine 25 form a helical membrane-spanning segment. Residues glutamine 26 to serine 54 are Cytoplasmic-facing. Residues glutamate 30–glutamine 36 form a required for interaction with CLCC1 region.

Homooligomer. Interacts (via C-terminus) with endoplasmic reticulum (ER) protein CLCC1; the interaction occurs at the mitochondria-associated ER membrane, a zone of contact between the ER and mitochondrial membranes, but does not appear to play a role in ER-mitochondria tethering and is not affected by ER stress.

It is found in the mitochondrion outer membrane. Plays a role in regulation of the unfolded protein response triggered by endoplasmic reticulum (ER) stress resulting from the presence of unfolded proteins in the ER lumen. In Homo sapiens (Human), this protein is Protein PIGBOS1.